The sequence spans 150 residues: Retinal rod rhodopsin-sensitive cGMP 3',5'-cyclic phosphodiesterase subunit delta (150 aa).

A required for association with membranes region spans residues 144–150 (RVRLFYV).

This sequence belongs to the PDE6D/unc-119 family. Interacts with the prenylated catalytic subunits of PDE6, an oligomer composed of two catalytic chains (PDE6A and PDE6B) and two inhibitory chains (gamma); has no effect on enzyme activity but promotes the release of the prenylated enzyme from cell membrane. Interacts with prenylated GRK1 and GRK7. Interacts with prenylated Ras family members, including RAP2A and RAP2C. Interacts with prenylated RHEB and NRAS. Interacts with prenylated HRAS and KRAS. Interacts with RAB13 (prenylated form); dissociates RAB13 from membranes. Interacts with prenylated INPP5E. Interacts with RAB28 (prenylated form); the interaction promotes RAB28 delivery to the photoreceptor outer segments. Interacts with RPGR. Interacts with ARL2. Interacts with ARL3; the interaction occurs specifically with the GTP-bound form of ARL3. Interaction with ARL2 and ARL3 promotes release of farnesylated cargo proteins. As to expression, widely expressed. Detected in various tissues including spleen, prostate gland, testis, ovary, small intestine, colon, retina, and peripheral blood.

Its subcellular location is the cytoplasm. The protein localises to the cytosol. It localises to the cytoplasmic vesicle membrane. It is found in the cytoskeleton. The protein resides in the cilium basal body. Promotes the release of prenylated target proteins from cellular membranes. Modulates the activity of prenylated or palmitoylated Ras family members by regulating their subcellular location. Required for normal ciliary targeting of farnesylated target proteins, such as INPP5E. Required for RAB28 localization to the cone cell outer segments in the retina. Modulates the subcellular location of target proteins by acting as a GTP specific dissociation inhibitor (GDI). Increases the affinity of ARL3 for GTP by several orders of magnitude. Stabilizes ARL3-GTP by decreasing the nucleotide dissociation rate. The polypeptide is Retinal rod rhodopsin-sensitive cGMP 3',5'-cyclic phosphodiesterase subunit delta (PDE6D) (Homo sapiens (Human)).